Reading from the N-terminus, the 953-residue chain is 2-oxoglutarate dehydrogenase E1 component (953 aa).

The protein belongs to the alpha-ketoglutarate dehydrogenase family. As to quaternary structure, homodimer. Part of the 2-oxoglutarate dehydrogenase (OGDH) complex composed of E1 (2-oxoglutarate dehydrogenase), E2 (dihydrolipoamide succinyltransferase) and E3 (dihydrolipoamide dehydrogenase); the complex contains multiple copies of the three enzymatic components (E1, E2 and E3). The cofactor is thiamine diphosphate.

It carries out the reaction N(6)-[(R)-lipoyl]-L-lysyl-[protein] + 2-oxoglutarate + H(+) = N(6)-[(R)-S(8)-succinyldihydrolipoyl]-L-lysyl-[protein] + CO2. Functionally, E1 component of the 2-oxoglutarate dehydrogenase (OGDH) complex which catalyzes the decarboxylation of 2-oxoglutarate, the first step in the conversion of 2-oxoglutarate to succinyl-CoA and CO(2). The sequence is that of 2-oxoglutarate dehydrogenase E1 component from Oceanobacillus iheyensis (strain DSM 14371 / CIP 107618 / JCM 11309 / KCTC 3954 / HTE831).